Consider the following 119-residue polypeptide: Large ribosomal subunit protein bL20 (119 aa).

Belongs to the bacterial ribosomal protein bL20 family.

Binds directly to 23S ribosomal RNA and is necessary for the in vitro assembly process of the 50S ribosomal subunit. It is not involved in the protein synthesizing functions of that subunit. The sequence is that of Large ribosomal subunit protein bL20 from Burkholderia cenocepacia (strain HI2424).